Reading from the N-terminus, the 211-residue chain is Uracil phosphoribosyltransferase (211 aa).

5-phospho-alpha-D-ribose 1-diphosphate contacts are provided by residues arginine 77, arginine 102, and 129–137 (DPMLATGGS). Residues isoleucine 192 and 197–199 (GDA) contribute to the uracil site. Residue aspartate 198 participates in 5-phospho-alpha-D-ribose 1-diphosphate binding.

Belongs to the UPRTase family. Mg(2+) serves as cofactor.

It carries out the reaction UMP + diphosphate = 5-phospho-alpha-D-ribose 1-diphosphate + uracil. The protein operates within pyrimidine metabolism; UMP biosynthesis via salvage pathway; UMP from uracil: step 1/1. With respect to regulation, allosterically activated by GTP. Its function is as follows. Catalyzes the conversion of uracil and 5-phospho-alpha-D-ribose 1-diphosphate (PRPP) to UMP and diphosphate. The protein is Uracil phosphoribosyltransferase of Corynebacterium aurimucosum (strain ATCC 700975 / DSM 44827 / CIP 107346 / CN-1) (Corynebacterium nigricans).